Here is a 54-residue protein sequence, read N- to C-terminus: Sec-independent protein translocase protein TatA (54 aa).

The helical transmembrane segment at 1–21 (MGMSFSHLLIVLLIIFVLFGA) threads the bilayer.

The protein belongs to the TatA/E family. In terms of assembly, the Tat system comprises two distinct complexes: a TatABC complex, containing multiple copies of TatA, TatB and TatC subunits, and a separate TatA complex, containing only TatA subunits. Substrates initially bind to the TatABC complex, which probably triggers association of the separate TatA complex to form the active translocon.

The protein resides in the cell inner membrane. Part of the twin-arginine translocation (Tat) system that transports large folded proteins containing a characteristic twin-arginine motif in their signal peptide across membranes. TatA could form the protein-conducting channel of the Tat system. This chain is Sec-independent protein translocase protein TatA, found in Rickettsia canadensis (strain McKiel).